A 516-amino-acid chain; its full sequence is Methionine--tRNA ligase (516 aa).

Positions 14 to 24 (SYPNGKPHIGH) match the 'HIGH' region motif. The 'KMSKS' region signature appears at 302 to 306 (KMSKS). Residue Lys-305 participates in ATP binding.

Belongs to the class-I aminoacyl-tRNA synthetase family. MetG type 2B subfamily. Monomer.

The protein resides in the cytoplasm. It carries out the reaction tRNA(Met) + L-methionine + ATP = L-methionyl-tRNA(Met) + AMP + diphosphate. In terms of biological role, is required not only for elongation of protein synthesis but also for the initiation of all mRNA translation through initiator tRNA(fMet) aminoacylation. The chain is Methionine--tRNA ligase from Rhizobium meliloti (strain 1021) (Ensifer meliloti).